The following is a 95-amino-acid chain: Protein E7 (95 aa).

Residues 1–40 (MIGKEATIPDIVLELQQLVQPTDLHCYEELSEEETETEEE) form an E7 terminal domain region. The LXCXE motif; interaction with host RB1 and TMEM173/STING signature appears at 24–28 (LHCYE). A zinc finger lies at 52 to 88 (CCFCGSKLRLIVLATHAGIRSQEELLLGEVQLVCPNC). The Nuclear export signal motif lies at 70-78 (IRSQEELLL).

This sequence belongs to the papillomaviridae E7 protein family. Homodimer. Homooligomer. Interacts with host RB1; this interaction induces dissociation of RB1-E2F1 complex thereby disrupting RB1 activity. Interacts with host EP300; this interaction represses EP300 transcriptional activity. Interacts with protein E2; this interaction inhibits E7 oncogenic activity. Interacts with host TMEM173/STING; this interaction impairs the ability of TMEM173/STING to sense cytosolic DNA and promote the production of type I interferon (IFN-alpha and IFN-beta). In terms of processing, highly phosphorylated.

It localises to the host cytoplasm. The protein resides in the host nucleus. In terms of biological role, plays a role in viral genome replication by driving entry of quiescent cells into the cell cycle. Stimulation of progression from G1 to S phase allows the virus to efficiently use the cellular DNA replicating machinery to achieve viral genome replication. E7 protein has both transforming and trans-activating activities. Induces the disassembly of the E2F1 transcription factor from RB1, with subsequent transcriptional activation of E2F1-regulated S-phase genes. Interferes with host histone deacetylation mediated by HDAC1 and HDAC2, leading to transcription activation. Also plays a role in the inhibition of both antiviral and antiproliferative functions of host interferon alpha. Interaction with host TMEM173/STING impairs the ability of TMEM173/STING to sense cytosolic DNA and promote the production of type I interferon (IFN-alpha and IFN-beta). This chain is Protein E7, found in Human papillomavirus 17.